The primary structure comprises 545 residues: Chaperonin GroEL (545 aa).

ATP is bound by residues Thr29–Pro32, Asp86–Thr90, Gly413, Asn476–Ala478, and Asp492.

It belongs to the chaperonin (HSP60) family. In terms of assembly, forms a cylinder of 14 subunits composed of two heptameric rings stacked back-to-back. Interacts with the co-chaperonin GroES.

The protein resides in the cytoplasm. The catalysed reaction is ATP + H2O + a folded polypeptide = ADP + phosphate + an unfolded polypeptide.. Functionally, together with its co-chaperonin GroES, plays an essential role in assisting protein folding. The GroEL-GroES system forms a nano-cage that allows encapsulation of the non-native substrate proteins and provides a physical environment optimized to promote and accelerate protein folding. The chain is Chaperonin GroEL from Shouchella clausii (strain KSM-K16) (Alkalihalobacillus clausii).